The sequence spans 147 residues: Large ribosomal subunit protein uL13 (147 aa).

It belongs to the universal ribosomal protein uL13 family. In terms of assembly, part of the 50S ribosomal subunit.

This protein is one of the early assembly proteins of the 50S ribosomal subunit, although it is not seen to bind rRNA by itself. It is important during the early stages of 50S assembly. This is Large ribosomal subunit protein uL13 from Salinispora arenicola (strain CNS-205).